The chain runs to 100 residues: Small ribosomal subunit protein uS14c (100 aa).

Belongs to the universal ribosomal protein uS14 family. In terms of assembly, part of the 30S ribosomal subunit.

The protein localises to the plastid. It localises to the chloroplast. Binds 16S rRNA, required for the assembly of 30S particles. In Pisum sativum (Garden pea), this protein is Small ribosomal subunit protein uS14c.